A 1006-amino-acid chain; its full sequence is Multiple C2 domain and transmembrane region protein 9 (1006 aa).

One can recognise a C2 1 domain in the interval 1 to 108 (MSNIKLGVEV…PRSEAAPFNY (108 aa)). A disordered region spans residues 135–156 (VTPSVPTPVPESPQAYSPSPRK). 3 consecutive C2 domains span residues 251–371 (RGTE…PQWY), 411–536 (SDSS…DRWV), and 579–704 (NSSD…THAY). Positions 284, 290, 337, 339, and 344 each coordinate Ca(2+). A run of 2 helical transmembrane segments spans residues 842–862 (MLVT…AVIG) and 946–966 (ATAI…ITPF).

The protein belongs to the MCTP family. Requires Ca(2+) as cofactor. As to expression, expressed in incipient leaf primordia and roots meristems. Observed in flowers.

It localises to the cell membrane. The protein localises to the cytoplasm. May function as a signaling molecule by regulating the trafficking of other regulators. This is Multiple C2 domain and transmembrane region protein 9 from Arabidopsis thaliana (Mouse-ear cress).